We begin with the raw amino-acid sequence, 142 residues long: Small ribosomal subunit protein uS12z (142 aa).

Pro-61 bears the Hydroxyproline mark.

It belongs to the universal ribosomal protein uS12 family.

The protein is Small ribosomal subunit protein uS12z (RPS23A) of Arabidopsis thaliana (Mouse-ear cress).